Consider the following 445-residue polypeptide: N-succinylarginine dihydrolase (445 aa).

Substrate-binding positions include 19–28, N110, and 137–138; these read AGLSFGNVAS and HR. E174 is a catalytic residue. Substrate is bound at residue R214. H250 is a catalytic residue. D252 and N363 together coordinate substrate. Residue C369 is the Nucleophile of the active site.

This sequence belongs to the succinylarginine dihydrolase family. Homodimer.

It carries out the reaction N(2)-succinyl-L-arginine + 2 H2O + 2 H(+) = N(2)-succinyl-L-ornithine + 2 NH4(+) + CO2. It participates in amino-acid degradation; L-arginine degradation via AST pathway; L-glutamate and succinate from L-arginine: step 2/5. Its function is as follows. Catalyzes the hydrolysis of N(2)-succinylarginine into N(2)-succinylornithine, ammonia and CO(2). This is N-succinylarginine dihydrolase from Shewanella halifaxensis (strain HAW-EB4).